We begin with the raw amino-acid sequence, 478 residues long: tRNA (guanine(10)-N(2))-methyltransferase TRMT11 (478 aa).

The disordered stretch occupies residues 457–478 (EERARSEMANAENVKSKGKEDV).

Belongs to the class I-like SAM-binding methyltransferase superfamily. TRM11 methyltransferase family. As to quaternary structure, part of the heterodimeric TRMT11-TRM112 methyltransferase complex; this complex forms an active tRNA methyltransferase, where TRMT112 acts as an activator of the catalytic subunit TRMT11.

Its subcellular location is the cytoplasm. The enzyme catalyses guanosine(10) in tRNA + S-adenosyl-L-methionine = N(2)-methylguanosine(10) in tRNA + S-adenosyl-L-homocysteine + H(+). Functionally, catalytic subunit of the TRMT11-TRM112 methyltransferase complex, that specifically mediates the S-adenosyl-L-methionine-dependent N(2)-methylation of guanosine nucleotide at position 10 (m2G10) in tRNAs. This is one of the major tRNA (guanine-N(2))-methyltransferases. This chain is tRNA (guanine(10)-N(2))-methyltransferase TRMT11 (trmt11.L), found in Xenopus laevis (African clawed frog).